Consider the following 377-residue polypeptide: Anhydro-N-acetylmuramic acid kinase (377 aa).

19–26 (GTSLDGVD) is an ATP binding site.

Belongs to the anhydro-N-acetylmuramic acid kinase family.

It catalyses the reaction 1,6-anhydro-N-acetyl-beta-muramate + ATP + H2O = N-acetyl-D-muramate 6-phosphate + ADP + H(+). It participates in amino-sugar metabolism; 1,6-anhydro-N-acetylmuramate degradation. Its pathway is cell wall biogenesis; peptidoglycan recycling. Functionally, catalyzes the specific phosphorylation of 1,6-anhydro-N-acetylmuramic acid (anhMurNAc) with the simultaneous cleavage of the 1,6-anhydro ring, generating MurNAc-6-P. Is required for the utilization of anhMurNAc either imported from the medium or derived from its own cell wall murein, and thus plays a role in cell wall recycling. This is Anhydro-N-acetylmuramic acid kinase from Roseobacter denitrificans (strain ATCC 33942 / OCh 114) (Erythrobacter sp. (strain OCh 114)).